A 464-amino-acid polypeptide reads, in one-letter code: Kynurenine 3-monooxygenase (464 aa).

Belongs to the aromatic-ring hydroxylase family. KMO subfamily. It depends on FAD as a cofactor.

The catalysed reaction is L-kynurenine + NADPH + O2 + H(+) = 3-hydroxy-L-kynurenine + NADP(+) + H2O. The protein operates within cofactor biosynthesis; NAD(+) biosynthesis; quinolinate from L-kynurenine: step 1/3. In terms of biological role, catalyzes the hydroxylation of L-kynurenine (L-Kyn) to form 3-hydroxy-L-kynurenine (L-3OHKyn). Required for synthesis of quinolinic acid. This chain is Kynurenine 3-monooxygenase, found in Myxococcus xanthus (strain DK1622).